Consider the following 333-residue polypeptide: Transcription factor MYB94 (333 aa).

HTH myb-type domains follow at residues 9-65 (KIGV…RPGI) and 66-116 (KRGN…KKKL). 2 DNA-binding regions (H-T-H motif) span residues 37–61 (WRSV…TNYL) and 89–112 (WAAI…NTHL). Polar residues predominate over residues 134–154 (KDFSISNKNTTSHQSSNSSKG). 2 disordered regions span residues 134 to 157 (KDFS…GQWE) and 183 to 218 (PTNF…YPSG). The span at 196–209 (SSSSSSTTTTTTTT) shows a compositional bias: low complexity.

Expressed in germinating seeds, rosette and cauline leaves, flower buds, open flowers, stems and developing siliques.

The protein resides in the nucleus. Its function is as follows. Transcription activator involved in the activation of cuticular wax biosynthesis under drought stress. Binds directly to the promoters of genes involved in cuticular wax biosynthesis. Transactivates WSD1, KCS2/DAISY, CER1, CER2, FAR3 and ECR genes. Functions together with MYB96 in the activation of cuticular wax biosynthesis. The chain is Transcription factor MYB94 from Arabidopsis thaliana (Mouse-ear cress).